A 2431-amino-acid polypeptide reads, in one-letter code: Histone-lysine N-methyltransferase trr (2431 aa).

Disordered stretches follow at residues 34-78, 135-201, 213-235, and 759-789; these read LQKR…STAP, DADK…ENSG, ASGA…AGTP, and QSAN…TPMN. Over residues 142–165 the composition is skewed to polar residues; sequence YRISTPRNSQSNPLLHRNTAFTSF. 3 stretches are compositionally biased toward low complexity: residues 171–183, 218–235, and 767–787; these read ASSS…STAS, SSTS…AGTP, and ATST…NATP. An LXXLL motif 1 motif is present at residues 801–805; sequence LKQLL. Disordered stretches follow at residues 863 to 895, 918 to 973, 1226 to 1292, 1404 to 1433, and 1478 to 1500; these read PVPT…GGSS, VGGE…QVKQ, HPQQ…AGGA, TSGG…KGGS, and GLVG…AEKM. Composition is skewed to low complexity over residues 866–895, 952–970, and 1226–1241; these read TATQ…GGSS, QQQQ…SPHQ, and HPQQ…QPQN. Positions 1269-1281 are enriched in basic residues; that stretch reads RKRRKREVQKPRR. Over residues 1410–1422 the composition is skewed to low complexity; the sequence is PASMSSAASAGSS. Gly residues predominate over residues 1423 to 1433; it reads SAGGGKLKGGS. Phosphothreonine is present on threonine 1486. Residues serine 1488 and serine 1490 each carry the phosphoserine modification. An LXXLL motif 2 motif is present at residues 1652–1656; it reads LANLL. The tract at residues 1790–1836 is disordered; sequence GGSAVKSSNGDSPGSFCASSTAPAEMVVKQEPEDEDEKTPSVPGNPT. Over residues 1794-1811 the composition is skewed to polar residues; it reads VKSSNGDSPGSFCASSTA. The C2HC pre-PHD-type zinc finger occupies 1895–1935; the sequence is TRQCVFCNQRGDGQADGPSRLLNFDVDKWVHLNCALWSNGV. The PHD-type zinc-finger motif lies at 1956–2003; it reads QACSACHQPGATIKCFKSRCNSLYHLPCAIREECVFYKNKSVHCSVHG. An LXXLL motif 3 motif is present at residues 2060-2064; it reads LSNLL. The region spanning 2061 to 2121 is the FYR N-terminal domain; that stretch reads SNLLRVGNMT…CRYICSIAEA (61 aa). Positions 2122 to 2209 constitute an FYR C-terminal domain; sequence GCKPEFRIQV…ETLTDYRFKY (88 aa). The 117-residue stretch at 2291-2407 folds into the SET domain; it reads NNVYLARSKI…RGEELSYDYK (117 aa). One can recognise a Post-SET domain in the interval 2415 to 2431; the sequence is HKIPCACGAPNCRKWMN.

The protein belongs to the class V-like SAM-binding methyltransferase superfamily. Histone-lysine methyltransferase family. TRX/MLL subfamily. Component of the MLL3/4 complex composed at least of the catalytic subunit trr, ash2, Rbbp5, Dpy-30L1, wds, hcf, ptip, Pa1, Utx, Lpt and Ncoa6. Interacts with nuclear receptor EcR in an ecdysone-dependent manner. Interacts with ash2; the interaction stabilizes trr. Widely expressed.

It localises to the nucleus. The protein resides in the chromosome. It catalyses the reaction L-lysyl(4)-[histone H3] + 3 S-adenosyl-L-methionine = N(6),N(6),N(6)-trimethyl-L-lysyl(4)-[histone H3] + 3 S-adenosyl-L-homocysteine + 3 H(+). Histone methyltransferase that acts as a coactivator for the ecdysone receptor during development. Specifically trimethylates 'Lys-4' of histone H3, a specific tag for epigenetic transcriptional activation. Recruited by EcR in an ecdysone-dependent manner causing H3 'Lys-4' trimethylation at ecdysone-inducible promoters, leading to activate expression. Plays a central role in the developing compound eye, during the progression of the morphogenetic furrow and in post-furrow differentiation of the retinal epithelium, notably by activating expression of hh. Also required for wing and abdominal development. This Drosophila melanogaster (Fruit fly) protein is Histone-lysine N-methyltransferase trr (trr).